The sequence spans 284 residues: Bifunctional protein FolD (284 aa).

NADP(+) contacts are provided by residues 165-167 (GRS), S190, and I231.

This sequence belongs to the tetrahydrofolate dehydrogenase/cyclohydrolase family. As to quaternary structure, homodimer.

It carries out the reaction (6R)-5,10-methylene-5,6,7,8-tetrahydrofolate + NADP(+) = (6R)-5,10-methenyltetrahydrofolate + NADPH. The catalysed reaction is (6R)-5,10-methenyltetrahydrofolate + H2O = (6R)-10-formyltetrahydrofolate + H(+). It participates in one-carbon metabolism; tetrahydrofolate interconversion. Catalyzes the oxidation of 5,10-methylenetetrahydrofolate to 5,10-methenyltetrahydrofolate and then the hydrolysis of 5,10-methenyltetrahydrofolate to 10-formyltetrahydrofolate. The protein is Bifunctional protein FolD of Dechloromonas aromatica (strain RCB).